A 557-amino-acid chain; its full sequence is Chaperonin GroEL 1 (557 aa).

ATP is bound by residues 29-32 (TLGP), lysine 50, 86-90 (DGTTT), glycine 416, and aspartate 495.

The protein belongs to the chaperonin (HSP60) family. In terms of assembly, forms a cylinder of 14 subunits composed of two heptameric rings stacked back-to-back. Interacts with the co-chaperonin GroES.

The protein localises to the cytoplasm. The catalysed reaction is ATP + H2O + a folded polypeptide = ADP + phosphate + an unfolded polypeptide.. Together with its co-chaperonin GroES, plays an essential role in assisting protein folding. The GroEL-GroES system forms a nano-cage that allows encapsulation of the non-native substrate proteins and provides a physical environment optimized to promote and accelerate protein folding. The protein is Chaperonin GroEL 1 of Protochlamydia amoebophila (strain UWE25).